We begin with the raw amino-acid sequence, 96 residues long: uncharacterized protein (96 aa).

The first 21 residues, 1–21, serve as a signal peptide directing secretion; that stretch reads MLASVLILGAIAVGSAIPTIA.

This is an uncharacterized protein from Archaeoglobus fulgidus (strain ATCC 49558 / DSM 4304 / JCM 9628 / NBRC 100126 / VC-16).